A 136-amino-acid chain; its full sequence is Protein LpdD (136 aa).

The protein belongs to the CinA family.

In terms of biological role, probably involved in tannin degradation, however the precise biochemical function in metabolism of gallate is unknown. The chain is Protein LpdD from Lactiplantibacillus plantarum (strain ATCC BAA-793 / NCIMB 8826 / WCFS1) (Lactobacillus plantarum).